The following is a 247-amino-acid chain: Probable transcriptional regulatory protein Gbem_3313 (247 aa).

This sequence belongs to the TACO1 family.

It is found in the cytoplasm. This chain is Probable transcriptional regulatory protein Gbem_3313, found in Citrifermentans bemidjiense (strain ATCC BAA-1014 / DSM 16622 / JCM 12645 / Bem) (Geobacter bemidjiensis).